Here is a 65-residue protein sequence, read N- to C-terminus: Large ribosomal subunit protein uL29 (65 aa).

This sequence belongs to the universal ribosomal protein uL29 family.

The protein is Large ribosomal subunit protein uL29 of Hyphomonas neptunium (strain ATCC 15444).